A 190-amino-acid chain; its full sequence is Pancreatic IgW, short secretory form (190 aa).

The region spanning 53–145 is the Ig-like C1-type domain; it reads PNITALVPSV…PPSNFRSMIS (93 aa). The N-linked (GlcNAc...) asparagine glycan is linked to asparagine 54. Cysteines 74 and 131 form a disulfide. The N-linked (GlcNAc...) asparagine glycan is linked to asparagine 179.

As to expression, expressed in pancreas, spleen, epigonal organ and at low levels in several other tissues.

It localises to the secreted. This chain is Pancreatic IgW, short secretory form, found in Ginglymostoma cirratum (Nurse shark).